A 254-amino-acid polypeptide reads, in one-letter code: Peroxisomal membrane protein 11 homolog (254 aa).

The Cytoplasmic portion of the chain corresponds to 1 to 91; it reads MAGILSKPNY…ILALFKVKNP (91 aa). A helical membrane pass occupies residues 92–112; it reads FAFLNILALIRQSGMYFYWVF. Residues 113 to 227 are Lumenal-facing; the sequence is DHLILGTNIG…DLIIASTLLK (115 aa). A helical transmembrane segment spans residues 228–248; it reads IYPFSQGTIGISGIISALIGA. Residues 249–254 are Cytoplasmic-facing; the sequence is YQMWPK.

It belongs to the peroxin-11 family.

The protein resides in the peroxisome membrane. Its function is as follows. Involved in peroxisomal proliferation. Could participate in peroxisomal elongation or fission. May be involved in parceling of peroxisomes into regular quanta. This is Peroxisomal membrane protein 11 homolog (pex11) from Dictyostelium discoideum (Social amoeba).